A 223-amino-acid chain; its full sequence is Adenine phosphoribosyltransferase (223 aa).

It belongs to the purine/pyrimidine phosphoribosyltransferase family. In terms of assembly, homodimer.

Its subcellular location is the cytoplasm. It carries out the reaction AMP + diphosphate = 5-phospho-alpha-D-ribose 1-diphosphate + adenine. It participates in purine metabolism; AMP biosynthesis via salvage pathway; AMP from adenine: step 1/1. Functionally, catalyzes a salvage reaction resulting in the formation of AMP, that is energically less costly than de novo synthesis. This chain is Adenine phosphoribosyltransferase, found in Mycobacterium bovis (strain ATCC BAA-935 / AF2122/97).